The chain runs to 122 residues: Cytochrome c-556 (122 aa).

The heme site is built by M11, C111, C114, and H115. The heme c site is built by M11, C111, C114, and H115.

Monomer. Binds 1 heme c group covalently per subunit.

Its function is as follows. Low-spin monoheme cytochrome c. This is Cytochrome c-556 from Agrobacterium tumefaciens (strain II Chrys).